Here is a 278-residue protein sequence, read N- to C-terminus: Phosphatidylglycerol--prolipoprotein diacylglyceryl transferase (278 aa).

4 helical membrane-spanning segments follow: residues 18–38 (IQVHWYGIIIASAVVLATILA), 55–75 (LILWALPVAIITARMYYVIFE), 90–110 (WDGGIAIYGALIGAGIVVYLF), and 115–135 (WIPVWLMLDIIAPVLIMAQGI). An a 1,2-diacyl-sn-glycero-3-phospho-(1'-sn-glycerol)-binding site is contributed by R137. 3 helical membrane-spanning segments follow: residues 177 to 197 (QPTFLYESLWDILGFIVLMSL), 207 to 227 (GEVFLSYVIWYAFGRFFVEGM), and 237 to 257 (IRVSQWLSVILFIGAIGILVF).

This sequence belongs to the Lgt family.

The protein localises to the cell membrane. It carries out the reaction L-cysteinyl-[prolipoprotein] + a 1,2-diacyl-sn-glycero-3-phospho-(1'-sn-glycerol) = an S-1,2-diacyl-sn-glyceryl-L-cysteinyl-[prolipoprotein] + sn-glycerol 1-phosphate + H(+). It participates in protein modification; lipoprotein biosynthesis (diacylglyceryl transfer). Its function is as follows. Catalyzes the transfer of the diacylglyceryl group from phosphatidylglycerol to the sulfhydryl group of the N-terminal cysteine of a prolipoprotein, the first step in the formation of mature lipoproteins. The sequence is that of Phosphatidylglycerol--prolipoprotein diacylglyceryl transferase from Pediococcus pentosaceus (strain ATCC 25745 / CCUG 21536 / LMG 10740 / 183-1w).